The following is a 307-amino-acid chain: Ribonuclease Z (307 aa).

Residues histidine 63, histidine 65, aspartate 67, histidine 68, histidine 141, aspartate 212, and histidine 270 each coordinate Zn(2+). Residue aspartate 67 is the Proton acceptor of the active site.

It belongs to the RNase Z family. Homodimer. The cofactor is Zn(2+).

It catalyses the reaction Endonucleolytic cleavage of RNA, removing extra 3' nucleotides from tRNA precursor, generating 3' termini of tRNAs. A 3'-hydroxy group is left at the tRNA terminus and a 5'-phosphoryl group is left at the trailer molecule.. Its function is as follows. Zinc phosphodiesterase, which displays some tRNA 3'-processing endonuclease activity. Probably involved in tRNA maturation, by removing a 3'-trailer from precursor tRNA. The sequence is that of Ribonuclease Z from Bacillus mycoides (strain KBAB4) (Bacillus weihenstephanensis).